The primary structure comprises 429 residues: Histidine--tRNA ligase (429 aa).

It belongs to the class-II aminoacyl-tRNA synthetase family. In terms of assembly, homodimer.

The protein localises to the cytoplasm. The catalysed reaction is tRNA(His) + L-histidine + ATP = L-histidyl-tRNA(His) + AMP + diphosphate + H(+). The protein is Histidine--tRNA ligase of Stutzerimonas stutzeri (strain A1501) (Pseudomonas stutzeri).